We begin with the raw amino-acid sequence, 283 residues long: Chromatin modification-related protein png1 (283 aa).

Residues 137–171 (YSPSGASSARQTPAPSRSGASTAGRRRTSATTRGA) show a composition bias toward low complexity. The segment at 137–224 (YSPSGASSAR…NEMVSEEDME (88 aa)) is disordered. Residues 181–216 (YTASLADSGSTRGQKVSNATATTQLETKADSTTPNE) are compositionally biased toward polar residues. The PHD-type zinc-finger motif lies at 228–277 (EKYCFCQQGSYGQMVACDNANCEREWFHMECVGLKAPPEGTWYCEACRDQ). Zn(2+) is bound by residues C231, C233, C244, C249, H255, C258, C271, and C274.

This sequence belongs to the ING family. Interacts with H3K4me3 and to a lesser extent with H3K4me2. Component of a histone deacetylase complex.

Its subcellular location is the nucleus. Its function is as follows. Component of a histone deacetylase complex responsible for the deacetylation of lysine residues on the N-terminal part of the core histones (H2A, H2B, H3 and H4). Histone deacetylation gives a tag for epigenetic repression and plays an important role in transcriptional regulation, cell cycle progression and developmental events. Has a role in silencing of mating type genes. The polypeptide is Chromatin modification-related protein png1 (png1) (Schizosaccharomyces pombe (strain 972 / ATCC 24843) (Fission yeast)).